The primary structure comprises 205 residues: Ras-related protein RABB1a (205 aa).

13–20 (GDTGVGKS) provides a ligand contact to GTP. Residues 35 to 43 (HDLTIGVEF) carry the Effector region motif. Residues 61–65 (DTAGQ), 119–122 (NKCD), and 149–150 (SA) contribute to the GTP site. Residues 179–205 (ANEPGITPGPFGGKDASSSQQRRGCCG) form a disordered region. Residues 194-205 (ASSSQQRRGCCG) are compositionally biased toward polar residues. S-geranylgeranyl cysteine attachment occurs at residues C203 and C204.

Belongs to the small GTPase superfamily. Rab family.

The protein resides in the cell membrane. Its function is as follows. Intracellular vesicle trafficking and protein transport. The chain is Ras-related protein RABB1a (RABB1A) from Arabidopsis thaliana (Mouse-ear cress).